A 456-amino-acid chain; its full sequence is Glutamyl-tRNA reductase (456 aa).

Substrate is bound by residues 49-52, Ser109, 114-116, and Gln120; these read TCNR and EQQ. Residue Cys50 is the Nucleophile of the active site. Residue 189–194 participates in NADP(+) binding; the sequence is GAGSMG.

Belongs to the glutamyl-tRNA reductase family. Homodimer.

It carries out the reaction (S)-4-amino-5-oxopentanoate + tRNA(Glu) + NADP(+) = L-glutamyl-tRNA(Glu) + NADPH + H(+). Its pathway is porphyrin-containing compound metabolism; protoporphyrin-IX biosynthesis; 5-aminolevulinate from L-glutamyl-tRNA(Glu): step 1/2. Its function is as follows. Catalyzes the NADPH-dependent reduction of glutamyl-tRNA(Glu) to glutamate 1-semialdehyde (GSA). This is Glutamyl-tRNA reductase from Mycolicibacterium vanbaalenii (strain DSM 7251 / JCM 13017 / BCRC 16820 / KCTC 9966 / NRRL B-24157 / PYR-1) (Mycobacterium vanbaalenii).